A 248-amino-acid polypeptide reads, in one-letter code: UPF0246 protein MYPE6270 (248 aa).

This sequence belongs to the UPF0246 family.

This Malacoplasma penetrans (strain HF-2) (Mycoplasma penetrans) protein is UPF0246 protein MYPE6270.